Reading from the N-terminus, the 620-residue chain is Estrogen receptor (620 aa).

Composition is skewed to polar residues over residues methionine 1 to isoleucine 10 and glycine 101 to threonine 111. 2 disordered regions span residues methionine 1 to glycine 55 and tyrosine 88 to threonine 111. The tract at residues methionine 1 to phenylalanine 185 is modulating. 2 NR C4-type zinc fingers span residues cysteine 186–cysteine 206 and cysteine 222–cysteine 246. The nuclear receptor DNA-binding region spans cysteine 186 to methionine 251. The hinge stretch occupies residues methionine 252–isoleucine 314. A disordered region spans residues lysine 286–arginine 308. The span at threonine 298–arginine 308 shows a compositional bias: gly residues. The 237-residue stretch at proline 315 to histidine 551 folds into the NR LBD domain. The tract at residues arginine 558–aspartate 620 is disordered.

This sequence belongs to the nuclear hormone receptor family. NR3 subfamily. As to quaternary structure, binds DNA as a homodimer. Can form a heterodimer with ER-beta. In terms of tissue distribution, widely expressed in brain, ovary, testis, and female liver.

Its subcellular location is the nucleus. Its function is as follows. The steroid hormones and their receptors are involved in the regulation of eukaryotic gene expression and affect cellular proliferation and differentiation in target tissues. This Oryzias latipes (Japanese rice fish) protein is Estrogen receptor (esr1).